The following is an 866-amino-acid chain: FHIP family protein v1g243165 (866 aa).

2 disordered regions span residues 739 to 761 (RDGPPPSLMRAHSIGSIGSASTS) and 781 to 814 (GSTADISEDASPVSQAPETTGRPRASAVVRESQT). Positions 751–761 (SIGSIGSASTS) are enriched in low complexity.

Belongs to the FHIP family.

The polypeptide is FHIP family protein v1g243165 (Nematostella vectensis (Starlet sea anemone)).